A 274-amino-acid chain; its full sequence is Shikimate dehydrogenase (NADP(+)) (274 aa).

Shikimate is bound by residues 14–16 (SKS) and Thr-61. Lys-65 serves as the catalytic Proton acceptor. Residue Glu-77 coordinates NADP(+). Shikimate contacts are provided by Asn-86 and Asp-102. Residues 126-130 (GAGGA), 149-154 (NRTLEK), and Met-212 contribute to the NADP(+) site. Shikimate is bound at residue Tyr-214. Gly-237 serves as a coordination point for NADP(+).

This sequence belongs to the shikimate dehydrogenase family. As to quaternary structure, homodimer.

The catalysed reaction is shikimate + NADP(+) = 3-dehydroshikimate + NADPH + H(+). It functions in the pathway metabolic intermediate biosynthesis; chorismate biosynthesis; chorismate from D-erythrose 4-phosphate and phosphoenolpyruvate: step 4/7. In terms of biological role, involved in the biosynthesis of the chorismate, which leads to the biosynthesis of aromatic amino acids. Catalyzes the reversible NADPH linked reduction of 3-dehydroshikimate (DHSA) to yield shikimate (SA). This Actinobacillus pleuropneumoniae serotype 5b (strain L20) protein is Shikimate dehydrogenase (NADP(+)).